A 694-amino-acid chain; its full sequence is Methionine--tRNA ligase (694 aa).

A 'HIGH' region motif is present at residues 12–22 (PYANGPLHLGH). 4 residues coordinate Zn(2+): Cys143, Cys146, Cys156, and Cys159. The 'KMSKS' region motif lies at 330 to 334 (KMSKS). Lys333 contributes to the ATP binding site. Over residues 550–573 (MAAPAAPATTTKPAPSKADAKPAA) the composition is skewed to low complexity. Residues 550-582 (MAAPAAPATTTKPAPSKADAKPAAVANPESQTT) form a disordered region. One can recognise a tRNA-binding domain in the interval 591–694 (DFAKLDLRIG…SGAQPGMPVR (104 aa)).

It belongs to the class-I aminoacyl-tRNA synthetase family. MetG type 1 subfamily. Homodimer. Zn(2+) serves as cofactor.

It localises to the cytoplasm. The catalysed reaction is tRNA(Met) + L-methionine + ATP = L-methionyl-tRNA(Met) + AMP + diphosphate. Its function is as follows. Is required not only for elongation of protein synthesis but also for the initiation of all mRNA translation through initiator tRNA(fMet) aminoacylation. In Xanthomonas euvesicatoria pv. vesicatoria (strain 85-10) (Xanthomonas campestris pv. vesicatoria), this protein is Methionine--tRNA ligase.